A 320-amino-acid polypeptide reads, in one-letter code: Ribose-phosphate pyrophosphokinase 3 (320 aa).

4 residues coordinate Mg(2+): D131, H133, D142, and D146.

This sequence belongs to the ribose-phosphate pyrophosphokinase family.

Its subcellular location is the cytoplasm. It carries out the reaction D-ribose 5-phosphate + ATP = 5-phospho-alpha-D-ribose 1-diphosphate + AMP + H(+). Its pathway is metabolic intermediate biosynthesis; 5-phospho-alpha-D-ribose 1-diphosphate biosynthesis; 5-phospho-alpha-D-ribose 1-diphosphate from D-ribose 5-phosphate (route I): step 1/1. Functionally, 5-phosphoribose 1-diphosphate synthase involved in nucleotide, histidine, and tryptophan biosynthesis. Active in heteromultimeric complexes with other 5-phosphoribose 1-diphosphate synthases (PRS2, PRS3, PRS4 and PRS5). This Saccharomyces cerevisiae (strain ATCC 204508 / S288c) (Baker's yeast) protein is Ribose-phosphate pyrophosphokinase 3 (PRS3).